Here is a 309-residue protein sequence, read N- to C-terminus: Ribonuclease Z (309 aa).

Zn(2+) is bound by residues H63, H65, D67, H68, H145, D216, and H274. D67 acts as the Proton acceptor in catalysis.

This sequence belongs to the RNase Z family. Homodimer. It depends on Zn(2+) as a cofactor.

The catalysed reaction is Endonucleolytic cleavage of RNA, removing extra 3' nucleotides from tRNA precursor, generating 3' termini of tRNAs. A 3'-hydroxy group is left at the tRNA terminus and a 5'-phosphoryl group is left at the trailer molecule.. In terms of biological role, zinc phosphodiesterase, which displays some tRNA 3'-processing endonuclease activity. Probably involved in tRNA maturation, by removing a 3'-trailer from precursor tRNA. The sequence is that of Ribonuclease Z from Streptococcus equi subsp. equi (strain 4047).